The following is a 604-amino-acid chain: Aspartate--tRNA(Asp/Asn) ligase (604 aa).

E175 is an L-aspartate binding site. The segment at 199–202 (QQFK) is aspartate. 2 residues coordinate L-aspartate: R221 and H456. 221–223 (RDE) lines the ATP pocket. E496 contacts ATP. R503 provides a ligand contact to L-aspartate. An ATP-binding site is contributed by 548–551 (GVDR).

This sequence belongs to the class-II aminoacyl-tRNA synthetase family. Type 1 subfamily. In terms of assembly, homodimer.

It is found in the cytoplasm. The catalysed reaction is tRNA(Asx) + L-aspartate + ATP = L-aspartyl-tRNA(Asx) + AMP + diphosphate. In terms of biological role, aspartyl-tRNA synthetase with relaxed tRNA specificity since it is able to aspartylate not only its cognate tRNA(Asp) but also tRNA(Asn). Reaction proceeds in two steps: L-aspartate is first activated by ATP to form Asp-AMP and then transferred to the acceptor end of tRNA(Asp/Asn). The polypeptide is Aspartate--tRNA(Asp/Asn) ligase (Methylobacterium nodulans (strain LMG 21967 / CNCM I-2342 / ORS 2060)).